Here is a 347-residue protein sequence, read N- to C-terminus: Putative ORC1-type DNA replication protein 1 (347 aa).

ATP contacts are provided by residues 34 to 38 (TGKTV), Tyr167, and Arg179.

Belongs to the CDC6/cdc18 family.

Functionally, involved in regulation of DNA replication. Has no effect on MCM helicase activity, either stimulatory or inhibitory. Does not bind DNA. The chain is Putative ORC1-type DNA replication protein 1 (cdc6-1) from Thermoplasma acidophilum (strain ATCC 25905 / DSM 1728 / JCM 9062 / NBRC 15155 / AMRC-C165).